The primary structure comprises 894 residues: Leucine--tRNA ligase, mitochondrial (894 aa).

A mitochondrion-targeting transit peptide spans 1 to 9 (MLSRPSSRF). The short motif at 56-66 (PYPSGALHIGH) is the 'HIGH' region element. Positions 646–650 (KMSKS) match the 'KMSKS' region motif. Lys649 lines the ATP pocket.

Belongs to the class-I aminoacyl-tRNA synthetase family.

It is found in the mitochondrion matrix. The catalysed reaction is tRNA(Leu) + L-leucine + ATP = L-leucyl-tRNA(Leu) + AMP + diphosphate. Catalyzes the attachment of leucine to tRNA(Leu) in the mitochondrion. This Saccharomyces cerevisiae (strain ATCC 204508 / S288c) (Baker's yeast) protein is Leucine--tRNA ligase, mitochondrial (NAM2).